The following is a 402-amino-acid chain: Nodal homolog 4-A (402 aa).

Residues 1 to 18 (MHLYFYCLILLFVPGGNS) form the signal peptide. The propeptide occupies 19–278 (LGINSYLKHM…TIAHTRRHRR (260 aa)). 3 N-linked (GlcNAc...) asparagine glycosylation sites follow: Asn-37, Asn-238, and Asn-340. Intrachain disulfides connect Cys-302–Cys-368, Cys-331–Cys-399, and Cys-335–Cys-401.

Belongs to the TGF-beta family. In terms of assembly, homodimer; disulfide-linked. As to expression, during blastula stages, expressed in the endoderm at a higher level dorsally than ventrally. Expressed in the deep cells of the Spemann organizer at the gastrula stage. Expressed in the notochord (a derivative of the organizer) and neural tube during the neural stages.

The protein localises to the secreted. Functionally, cooperation and regulatory loops of multiple nodals are essential for mesendoderm patterning in early embryos. Plays a role in mesoderm formation and may be required for neural development. The chain is Nodal homolog 4-A (nodal4-a) from Xenopus laevis (African clawed frog).